The following is a 386-amino-acid chain: Meiotic chromosome segregation protein C1539.02 (386 aa).

Disordered regions lie at residues M1–S28, R46–Q85, and D366–G386. Polar residues predominate over residues A15–S28.

It localises to the nucleus. Required for meiotic chromosome segregation. The chain is Meiotic chromosome segregation protein C1539.02 from Schizosaccharomyces pombe (strain 972 / ATCC 24843) (Fission yeast).